Reading from the N-terminus, the 60-residue chain is UPF0434 protein ECA2555 (60 aa).

It belongs to the UPF0434 family.

The chain is UPF0434 protein ECA2555 from Pectobacterium atrosepticum (strain SCRI 1043 / ATCC BAA-672) (Erwinia carotovora subsp. atroseptica).